We begin with the raw amino-acid sequence, 91 residues long: Cell division topological specificity factor (91 aa).

This sequence belongs to the MinE family.

Functionally, prevents the cell division inhibition by proteins MinC and MinD at internal division sites while permitting inhibition at polar sites. This ensures cell division at the proper site by restricting the formation of a division septum at the midpoint of the long axis of the cell. This Erwinia tasmaniensis (strain DSM 17950 / CFBP 7177 / CIP 109463 / NCPPB 4357 / Et1/99) protein is Cell division topological specificity factor.